The sequence spans 393 residues: Digeranylgeranylglycerophospholipid reductase (393 aa).

FAD is bound by residues alanine 14, aspartate 33, cysteine 44, alanine 45, glycine 47, arginine 100, alanine 124, aspartate 280, glycine 292, and isoleucine 293.

This sequence belongs to the geranylgeranyl reductase family. DGGGPL reductase subfamily. The cofactor is FAD.

It catalyses the reaction a 2,3-bis-O-phytanyl-sn-glycerol 1-phospholipid + 8 A = a 2,3-bis-O-(geranylgeranyl)-sn-glycerol 1-phospholipid + 8 AH2. The enzyme catalyses 2,3-bis-O-(phytanyl)-sn-glycerol 1-phosphate + 8 A = 2,3-bis-O-(geranylgeranyl)-sn-glycerol 1-phosphate + 8 AH2. It carries out the reaction CDP-2,3-bis-O-(geranylgeranyl)-sn-glycerol + 8 AH2 = CDP-2,3-bis-O-(phytanyl)-sn-glycerol + 8 A. The catalysed reaction is archaetidylserine + 8 AH2 = 2,3-bis-O-phytanyl-sn-glycero-3-phospho-L-serine + 8 A. It participates in membrane lipid metabolism; glycerophospholipid metabolism. Its function is as follows. Is involved in the reduction of 2,3-digeranylgeranylglycerophospholipids (unsaturated archaeols) into 2,3-diphytanylglycerophospholipids (saturated archaeols) in the biosynthesis of archaeal membrane lipids. Catalyzes the formation of archaetidic acid (2,3-di-O-phytanyl-sn-glyceryl phosphate) from 2,3-di-O-geranylgeranylglyceryl phosphate (DGGGP) via the hydrogenation of each double bond of the isoprenoid chains. Is also probably able to reduce double bonds of geranyl groups in CDP-2,3-bis-O-(geranylgeranyl)-sn-glycerol and archaetidylserine, thus acting at various stages in the biosynthesis of archaeal membrane lipids. The polypeptide is Digeranylgeranylglycerophospholipid reductase (Methanobrevibacter smithii (strain ATCC 35061 / DSM 861 / OCM 144 / PS)).